Reading from the N-terminus, the 412-residue chain is NADH-quinone oxidoreductase subunit 4 (412 aa).

Belongs to the complex I 49 kDa subunit family. As to quaternary structure, NDH-1 is composed of at least 14 different subunits, Nqo1 to Nqo14. The complex has a L-shaped structure, with the hydrophobic arm (subunits Nqo7, Nqo8, Nqo10 to Nqo14) embedded in the inner membrane and the hydrophilic peripheral arm (subunits Nqo1 to Nqo6, Nqo9) protruding into the bacterial cytoplasm. The hydrophilic domain contains all the redox centers.

The protein localises to the cell inner membrane. It catalyses the reaction a quinone + NADH + 5 H(+)(in) = a quinol + NAD(+) + 4 H(+)(out). Its function is as follows. NDH-1 shuttles electrons from NADH, via FMN and iron-sulfur (Fe-S) centers, to quinones in the respiratory chain. The immediate electron acceptor for the enzyme in this species is believed to be ubiquinone. Couples the redox reaction to proton translocation (for every two electrons transferred, four hydrogen ions are translocated across the cytoplasmic membrane), and thus conserves the redox energy in a proton gradient. This chain is NADH-quinone oxidoreductase subunit 4 (nqo4), found in Paracoccus denitrificans.